Reading from the N-terminus, the 358-residue chain is Na(+)/H(+) exchange regulatory cofactor NHE-RF1 (358 aa).

Serine 2 is subject to N-acetylserine. Phosphoserine occurs at positions 2 and 46. One can recognise a PDZ 1 domain in the interval leucine 14–glutamate 94. The segment covering glutamine 114 to glycine 132 has biased composition (low complexity). Residues glutamine 114–glycine 192 form a disordered region. The segment covering asparagine 135–proline 152 has biased composition (basic and acidic residues). Residues leucine 154–glutamate 234 enclose the PDZ 2 domain. A phosphoserine mark is found at serine 162, serine 269, serine 280, serine 290, and serine 291. The disordered stretch occupies residues alanine 277 to leucine 358. Residues serine 288 to glutamine 306 show a composition bias toward polar residues. Threonine 293 carries the phosphothreonine modification. A phosphoserine mark is found at serine 294, serine 299, and serine 302. Over residues aspartate 307–proline 319 the composition is skewed to low complexity. Over residues tryptophan 348–leucine 358 the composition is skewed to basic and acidic residues.

In terms of assembly, homodimer, and heterodimer with NHERF2. Binds the N-termini of EZR, RDX and MSN. Binds the C-termini of PDGFRA, PDGFRB, ADRB2, NOS2 and CFTR. Binds ARHGAP17, EPI64, RACK1, OPRK1, GNAQ, CTNNB1 and PLCB3. Binds PDZK1. Interacts with CLCN3. Binds the C-terminus of PAG1. In resting T-cells, part of a PAG1-NHERF1-MSN complex which is disrupted upon TCR activation. Forms a complex with CFTR and SLC4A7. Forms a complex with SLC4A7 and ATP6V1B1. Interacts with TRPC4 (via the PDZ-binding domain). Directly interacts with HTR4. Interacts (via the PDZ 1 domain) with PODXL (via the C-terminal PDZ-binding motif DTHL); interaction is not detected in glomerular epithelium cells. Interacts (via the PDZ 1 domain) with PODXL (via the C-terminal PDZ-binding motif DTHL); the interaction take place early in the secretory pathway and is necessary for its apical membrane sorting. Interacts with SLC26A3. Interacts with MCC. Interacts with SLC34A1. Interacts (via the PDZ domains) with SLC26A6 isoform 4 and isoform 5. Interacts (via PDZ domains) with ACE2 (via PDZ-binding motif); the interaction may enhance ACE2 membrane residence. Post-translationally, phosphorylated on serine residues. In terms of tissue distribution, detected in liver, kidney, pancreas, prostate, spleen, small intestine and placenta, in particular in the syncytiotrophoblast.

Its subcellular location is the cytoplasm. It localises to the apical cell membrane. The protein localises to the endomembrane system. The protein resides in the cell projection. It is found in the filopodium. Its subcellular location is the ruffle. It localises to the microvillus. Its function is as follows. Scaffold protein that connects plasma membrane proteins with members of the ezrin/moesin/radixin family and thereby helps to link them to the actin cytoskeleton and to regulate their surface expression. Necessary for recycling of internalized ADRB2. Was first known to play a role in the regulation of the activity and subcellular location of SLC9A3. Necessary for cAMP-mediated phosphorylation and inhibition of SLC9A3. May enhance Wnt signaling. May participate in HTR4 targeting to microvilli. Involved in the regulation of phosphate reabsorption in the renal proximal tubules. Involved in sperm capacitation. May participate in the regulation of the chloride and bicarbonate homeostasis in spermatozoa. This chain is Na(+)/H(+) exchange regulatory cofactor NHE-RF1, found in Homo sapiens (Human).